A 133-amino-acid polypeptide reads, in one-letter code: Large ribosomal subunit protein bL20 (133 aa).

Belongs to the bacterial ribosomal protein bL20 family.

Its function is as follows. Binds directly to 23S ribosomal RNA and is necessary for the in vitro assembly process of the 50S ribosomal subunit. It is not involved in the protein synthesizing functions of that subunit. The sequence is that of Large ribosomal subunit protein bL20 from Mesorhizobium japonicum (strain LMG 29417 / CECT 9101 / MAFF 303099) (Mesorhizobium loti (strain MAFF 303099)).